The sequence spans 327 residues: Aldo-keto reductase family 1 member A1 (327 aa).

NADP(+)-binding positions include 13–22 (GQKIPLIGLG), threonine 23, tryptophan 24, and aspartate 47. The Proton donor role is filled by tyrosine 52. Serine 164, asparagine 165, serine 213, leucine 215, serine 217, lysine 265, serine 266, valine 267, threonine 268, arginine 271, glutamine 274, and asparagine 275 together coordinate NADP(+).

Belongs to the aldo/keto reductase family.

The protein localises to the cytoplasm. Its subcellular location is the cytosol. It is found in the apical cell membrane. The enzyme catalyses a primary alcohol + NADP(+) = an aldehyde + NADPH + H(+). It carries out the reaction S-nitroso-CoA + NADPH + H(+) = sulfinamide-CoA + NADP(+). The catalysed reaction is S-nitrosoglutathione + NADPH + H(+) = S-(hydroxysulfenamide)glutathione + NADP(+). Its function is as follows. Catalyzes the NADPH-dependent reduction of a wide variety of carbonyl-containing compounds to their corresponding alcohols. Displays enzymatic activity towards endogenous metabolites such as aromatic and aliphatic aldehydes, ketones, monosaccharides and bile acids. Acts as an aldehyde-detoxification enzyme. Also acts as an inhibitor of protein S-nitrosylation by mediating degradation of S-nitroso-coenzyme A (S-nitroso-CoA), a cofactor required to S-nitrosylate proteins. Also acts as a S-nitroso-glutathione reductase by catalyzing the NADPH-dependent reduction of S-nitrosoglutathione. Displays no reductase activity towards retinoids. In Xenopus tropicalis (Western clawed frog), this protein is Aldo-keto reductase family 1 member A1 (akr1a1).